The primary structure comprises 411 residues: POU domain, class 4, transcription factor 2 (411 aa).

Residues 29-95 are disordered; that stretch reads LHSASPGSSA…SEAMRRACLP (67 aa). Over residues 31–52 the composition is skewed to low complexity; the sequence is SASPGSSAPAAPSASSPSSSSN. Gly residues-rich tracts occupy residues 53–68 and 76–86; these read AGGG…GGGR and GSGGSGGGGGS. The required for transcriptional activation stretch occupies residues 93-239; it reads CLPTPPSNIF…MHQAALSMAH (147 aa). The short motif at 112–121 is the POU-IV box element; the sequence is RAEALAAVDI. The segment covering 154–168 has biased composition (low complexity); it reads SAASSSSVPISHPSA. The segment at 154–190 is disordered; sequence SAASSSSVPISHPSALAGTHHHHHHHHHHHHQPHQAL. Basic residues predominate over residues 172–186; sequence THHHHHHHHHHHHQP. A Nuclear speckle targeting signal motif is present at residues 173–187; sequence HHHHHHHHHHHHQPH. Residues 240-411 are required for DNA-binding and transcriptional repression; that stretch reads AHGLPSHMGC…QKRMKYSAGI (172 aa). One can recognise a POU-specific domain in the interval 252–329; it reads DVDADPRDLE…ILQAWLEEAE (78 aa). The segment at residues 347 to 406 is a DNA-binding region (homeobox); sequence KKRKRTSIAAPEKRSLEAYFAIQPRPSSEKIAAIAEKLDLKKNVVRVWFCNQRQKQKRMK.

It belongs to the POU transcription factor family. Class-4 subfamily. Isoform 2: Interacts with POU4F1 isoform 1; this interaction inhibits both POU4F1 DNA-binding and transcriptional activities. Isoform 2: Interacts (C-terminus) with ESR1 (via DNA-binding domain); this interaction increases the estrogen receptor ESR1 transcriptional activity in a DNA- and ligand 17-beta-estradiol-independent manner. Isoform 2: Interacts (via C-terminus) with TP53 (via N-terminus). Interacts with DLX1 (via homeobox DNA-binding domain); this interaction suppresses DLX1-mediated transcriptional activity in postnatal retina enhancing retinal ganglion cell (RGC) differentiation. Interacts with DLX2 (via homeobox DNA-binding domain); this interaction enhances RGC differentiation. Isoform 1: Interacts (via C-terminus) with ISL1 (via C-terminus). Isoform 1: Interacts with ISL2. Isoform 1: Interacts with LHX2. Expressed in retinal ganglion cells (RGCs). Expressed in mature osteoclasts. Expressed in cells of layers of the superior colliculus and the adjacent periaqueductal gray (at protein level). Expressed in the brain, peripheral sensory nervous system and retina. Expressed in the optical, intermediate, and deep gray areas of the superior colliculus, the dorsal column of the mesencephalic and pontine central gray, and the lateral interpeduncular nucleus of the brain. Expressed predominantly in postmitotic, terminally differentiated neurons. Expressed in ganglion cell layer (GCL) of the retina.

Its subcellular location is the nucleus. The protein resides in the nucleus speckle. It localises to the cytoplasm. Its function is as follows. Tissue-specific DNA-binding transcription factor involved in the development and differentiation of target cells. Functions either as activator or repressor by modulating the rate of target gene transcription through RNA polymerase II enzyme in a promoter-dependent manner. Binds to the consensus octamer motif 5'-AT[A/T]A[T/A]T[A/T]A-3' of promoter of target genes. Plays a fundamental role in the gene regulatory network essential for retinal ganglion cell (RGC) differentiation. Binds to an octamer site to form a ternary complex with ISL1; cooperates positively with ISL1 and ISL2 to potentiate transcriptional activation of RGC target genes being involved in RGC fate commitment in the developing retina and RGC axon formation and pathfinding. Inhibits DLX1 and DLX2 transcriptional activities preventing DLX1- and DLX2-mediated ability to promote amacrine cell fate specification. In cooperation with TP53 potentiates transcriptional activation of BAX promoter activity increasing neuronal cell apoptosis. Negatively regulates BAX promoter activity in the absence of TP53. Acts as a transcriptional coactivator via its interaction with the transcription factor ESR1 by enhancing its effect on estrogen response element (ERE)-containing promoter. Antagonizes the transcriptional stimulatory activity of POU4F1 by preventing its binding to an octamer motif. Involved in TNFSF11-mediated terminal osteoclast differentiation. The sequence is that of POU domain, class 4, transcription factor 2 from Mus musculus (Mouse).